Here is a 1337-residue protein sequence, read N- to C-terminus: GTPase activating protein homolog 3 (1337 aa).

Residues 14–264 form the F-BAR domain; the sequence is PESFADLWDG…LINSINNEDE (251 aa). 2 disordered regions span residues 279–328 and 345–392; these read PKPF…LPIF and ITNS…RFST. The span at 293–302 shows a compositional bias: pro residues; sequence TPPPPPPPQI. Over residues 345–358 the composition is skewed to polar residues; the sequence is ITNSLSLSSDSLQT. One can recognise a Rho-GAP domain in the interval 422–611; that stretch reads CKIEDIMVAQ…NIIEHFKPLQ (190 aa). Disordered stretches follow at residues 612–689, 733–781, and 794–821; these read VNDS…TTNT, VNNN…HTVA, and ITTPQKSIGDGNGLIGQSPSAHLMSPSE. Low complexity-rich tracts occupy residues 621–637, 645–687, and 734–772; these read SSSSSSSTSINQSSIES, SSTN…SSTT, and NNNNQNQNQNQNQNQNQDQNQNQSKQPIQSSNQTQQQVS. The stretch at 830–859 forms a coiled coil; that stretch reads YLEDQERCKQRIDELHTQVNELYSDITTIE. Disordered regions lie at residues 1041-1102 and 1114-1166; these read SDPD…INNS and KSAL…AHAI. The segment covering 1047–1063 has biased composition (polar residues); that stretch reads SPPTISNTTNRLLNTSG. 2 stretches are compositionally biased toward low complexity: residues 1064-1102 and 1114-1159; these read STDFSTTPLSSSPSTSSTSLSTNNNNNNNGNRNLDINNS and KSAL…TTTN. The stretch at 1189-1219 forms a coiled coil; it reads LEINNKLHSQLTEELKKKQQQYKQLIFDIID.

It localises to the cytoplasm. It is found in the contractile vacuole. Its function is as follows. Rho GTPase-activating protein involved in the signal transduction pathway. The sequence is that of GTPase activating protein homolog 3 (mgp3) from Dictyostelium discoideum (Social amoeba).